A 416-amino-acid chain; its full sequence is UDP-N-acetylglucosamine 1-carboxyvinyltransferase (416 aa).

Phosphoenolpyruvate is bound at residue 22–23; it reads KN. Arg-91 contacts UDP-N-acetyl-alpha-D-glucosamine. The active-site Proton donor is Cys-115. Cys-115 is modified (2-(S-cysteinyl)pyruvic acid O-phosphothioketal). Residues Asp-304 and Ile-326 each coordinate UDP-N-acetyl-alpha-D-glucosamine.

It belongs to the EPSP synthase family. MurA subfamily.

It is found in the cytoplasm. It catalyses the reaction phosphoenolpyruvate + UDP-N-acetyl-alpha-D-glucosamine = UDP-N-acetyl-3-O-(1-carboxyvinyl)-alpha-D-glucosamine + phosphate. It participates in cell wall biogenesis; peptidoglycan biosynthesis. Its function is as follows. Cell wall formation. Adds enolpyruvyl to UDP-N-acetylglucosamine. The polypeptide is UDP-N-acetylglucosamine 1-carboxyvinyltransferase (Thermodesulfovibrio yellowstonii (strain ATCC 51303 / DSM 11347 / YP87)).